Here is a 312-residue protein sequence, read N- to C-terminus: Glyoxylate/hydroxypyruvate reductase A (312 aa).

Arginine 227 is a catalytic residue. The Proton donor role is filled by histidine 275.

It belongs to the D-isomer specific 2-hydroxyacid dehydrogenase family. GhrA subfamily.

The protein localises to the cytoplasm. The enzyme catalyses glycolate + NADP(+) = glyoxylate + NADPH + H(+). The catalysed reaction is (R)-glycerate + NAD(+) = 3-hydroxypyruvate + NADH + H(+). It catalyses the reaction (R)-glycerate + NADP(+) = 3-hydroxypyruvate + NADPH + H(+). Catalyzes the NADPH-dependent reduction of glyoxylate and hydroxypyruvate into glycolate and glycerate, respectively. The polypeptide is Glyoxylate/hydroxypyruvate reductase A (Citrobacter koseri (strain ATCC BAA-895 / CDC 4225-83 / SGSC4696)).